Here is a 205-residue protein sequence, read N- to C-terminus: Glutathione peroxidase 1 (205 aa).

The residue at position 37 (Ser-37) is a Phosphoserine. Sec-52 is an active-site residue. Residue Sec-52 is a non-standard amino acid, selenocysteine. An N6-acetyllysine; alternate mark is found at Lys-91 and Lys-117. N6-succinyllysine; alternate occurs at positions 91 and 117. Lys-117 carries N-linked (Glc) (glycation) lysine; in vitro glycosylation. An N6-acetyllysine modification is found at Lys-124. Residue Lys-151 is modified to N6-acetyllysine; alternate. Lys-151 is modified (N6-succinyllysine; alternate). Phosphoserine occurs at positions 200 and 204.

This sequence belongs to the glutathione peroxidase family. As to quaternary structure, homotetramer. Interacts with MIEN1. Post-translationally, during periods of oxidative stress, Sec-52 may react with a superoxide radical, irreversibly lose hydroselenide and be converted to dehydroalanine.

It is found in the cytoplasm. The protein resides in the mitochondrion. It carries out the reaction 2 glutathione + H2O2 = glutathione disulfide + 2 H2O. The enzyme catalyses a hydroperoxy polyunsaturated fatty acid + 2 glutathione = a hydroxy polyunsaturated fatty acid + glutathione disulfide + H2O. The catalysed reaction is tert-butyl hydroperoxide + 2 glutathione = tert-butanol + glutathione disulfide + H2O. It catalyses the reaction cumene hydroperoxide + 2 glutathione = 2-phenylpropan-2-ol + glutathione disulfide + H2O. It carries out the reaction (13S)-hydroperoxy-(9Z,11E)-octadecadienoate + 2 glutathione = (13S)-hydroxy-(9Z,11E)-octadecadienoate + glutathione disulfide + H2O. The enzyme catalyses (9S)-hydroperoxy-(10E,12Z)-octadecadienoate + 2 glutathione = (9S)-hydroxy-(10E,12Z)-octadecadienoate + glutathione disulfide + H2O. The catalysed reaction is (5S)-hydroperoxy-(6E,8Z,11Z,14Z)-eicosatetraenoate + 2 glutathione = (5S)-hydroxy-(6E,8Z,11Z,14Z)-eicosatetraenoate + glutathione disulfide + H2O. It catalyses the reaction (12S)-hydroperoxy-(5Z,8Z,10E,14Z)-eicosatetraenoate + 2 glutathione = (12S)-hydroxy-(5Z,8Z,10E,14Z)-eicosatetraenoate + glutathione disulfide + H2O. It carries out the reaction (12R)-hydroperoxy-(5Z,8Z,10E,14Z)-eicosatetraenoate + 2 glutathione = (12R)-hydroxy-(5Z,8Z,10E,14Z)-eicosatetraenoate + glutathione disulfide + H2O. The enzyme catalyses (15S)-hydroperoxy-(5Z,8Z,11Z,13E)-eicosatetraenoate + 2 glutathione = (15S)-hydroxy-(5Z,8Z,11Z,13E)-eicosatetraenoate + glutathione disulfide + H2O. The catalysed reaction is (5S)-hydroperoxy-(6E,8Z,11Z,14Z,17Z)-eicosapentaenoate + 2 glutathione = (5S)-hydroxy-(6E,8Z,11Z,14Z,17Z)-eicosapentaenoate + glutathione disulfide + H2O. It catalyses the reaction (15S)-hydroperoxy-(5Z,8Z,11Z,13E,17Z)-eicosapentaenoate + 2 glutathione = (15S)-hydroxy-(5Z,8Z,11Z,13E,17Z)-eicosapentaenoate + glutathione disulfide + H2O. It carries out the reaction (15S)-hydroperoxy-(11Z,13E)-eicosadienoate + 2 glutathione = (15S)-hydroxy-(11Z,13E)-eicosadienoate + glutathione disulfide + H2O. The enzyme catalyses (17S)-hydroperoxy-(4Z,7Z,10Z,13Z,15E,19Z)-docosahexaenoate + 2 glutathione = (17S)-hydroxy-(4Z,7Z,10Z,13Z,15E,19Z)-docosahexaenoate + glutathione disulfide + H2O. Its function is as follows. Catalyzes the reduction of hydroperoxides in a glutathione-dependent manner thus regulating cellular redox homeostasis. Can reduce small soluble hydroperoxides such as H2O2, cumene hydroperoxide and tert-butyl hydroperoxide, as well as several fatty acid-derived hydroperoxides. In platelets catalyzes the reduction of 12-hydroperoxyeicosatetraenoic acid, the primary product of the arachidonate 12-lipoxygenase pathway. In Bos taurus (Bovine), this protein is Glutathione peroxidase 1 (GPX1).